A 963-amino-acid chain; its full sequence is Phosphoenolpyruvate carboxylase 2 (963 aa).

The residue at position 11 (serine 11) is a Phosphoserine. Residues histidine 172 and lysine 599 contribute to the active site. At serine 701 the chain carries Phosphoserine.

It belongs to the PEPCase type 1 family. Homotetramer. It depends on Mg(2+) as a cofactor. Expressed in all plant organs, with higher levels in stems and leaves.

It localises to the cytoplasm. The enzyme catalyses oxaloacetate + phosphate = phosphoenolpyruvate + hydrogencarbonate. With respect to regulation, by light-reversible phosphorylation. Its function is as follows. Through the carboxylation of phosphoenolpyruvate (PEP) it forms oxaloacetate, a four-carbon dicarboxylic acid source for the tricarboxylic acid cycle. The polypeptide is Phosphoenolpyruvate carboxylase 2 (PPC2) (Arabidopsis thaliana (Mouse-ear cress)).